Consider the following 66-residue polypeptide: MGMRMRMMFTVFLLVVLANTVVSFPSDRDSDGADAEASDEPVEFERDENGCCWNPSCPRPRCTGRR.

Positions 1–23 are cleaved as a signal peptide; sequence MGMRMRMMFTVFLLVVLANTVVS. Residues 24–46 constitute a propeptide that is removed on maturation; sequence FPSDRDSDGADAEASDEPVEFER. Residues 25 to 48 are disordered; sequence PSDRDSDGADAEASDEPVEFERDE. The segment covering 32–42 has biased composition (acidic residues); sequence GADAEASDEPV. 2 disulfide bridges follow: C51–C57 and C52–C62. Position 63 is a threonine amide (T63).

It belongs to the conotoxin A superfamily. In terms of tissue distribution, expressed by the venom duct.

Its subcellular location is the secreted. The polypeptide is Conotoxin Bu1.4 (Conus bullatus (Bubble cone)).